The chain runs to 344 residues: MKDVTIIGGGPSGLYASFYAGLRDMSVRLIDVQSELGGKMRIYPEKIIWDIGGIAPKPCHEILKDTIKQGLYFKPEVHLNERVVDIRKKAERHFEVETEAGEIYTSKAVIIAIGAGIINPKQLDVKGVERYQLTNLHYVVQSYRRFKDKDVLISGGGNTALDWAHDIAKIAKSVTVVYRKEDVSGHEAMKTLVTDLNVKLCPKTRIKYLVGNDDETHISEVVLEHVESGDRHTVKFDDVIISHGFDRCNTLLSETSSKLDMHDDCRVKGFGNTTTSIPGIYACGDIVYHDAKSHLIASAFSDGANAANLAKTYIQPDANAEGYVSSHHEVFKEANKTIVNKHLY.

Positions 12, 31, 39, 43, 83, 118, 285, and 326 each coordinate FAD.

Belongs to the ferredoxin--NADP reductase type 2 family. In terms of assembly, homodimer. FAD serves as cofactor.

The enzyme catalyses 2 reduced [2Fe-2S]-[ferredoxin] + NADP(+) + H(+) = 2 oxidized [2Fe-2S]-[ferredoxin] + NADPH. This is Ferredoxin--NADP reductase from Staphylococcus aureus (strain JH1).